Here is a 110-residue protein sequence, read N- to C-terminus: Small ribosomal subunit protein bS16 (110 aa).

Residues 84-110 (KRTARNNPEKAVPRKERKAQAEAAAKS) are disordered. A compositionally biased stretch (basic and acidic residues) spans 90 to 103 (NPEKAVPRKERKAQ).

This sequence belongs to the bacterial ribosomal protein bS16 family.

The protein is Small ribosomal subunit protein bS16 of Nitrobacter hamburgensis (strain DSM 10229 / NCIMB 13809 / X14).